We begin with the raw amino-acid sequence, 55 residues long: Large ribosomal subunit protein bL33 (55 aa).

This sequence belongs to the bacterial ribosomal protein bL33 family.

The polypeptide is Large ribosomal subunit protein bL33 (Methylocella silvestris (strain DSM 15510 / CIP 108128 / LMG 27833 / NCIMB 13906 / BL2)).